The sequence spans 499 residues: RNA polymerase sigma factor SigA (499 aa).

2 stretches are compositionally biased toward basic residues: residues 1–12 (MSSPKKNFKKPQ) and 77–87 (KKRRGRKPKHA). Disordered regions lie at residues 1–25 (MSSP…LNEE) and 68–89 (QENK…HAPL). A sigma-70 factor domain-2 region spans residues 252–322 (LVTSNLRLVV…TRAIADQART (71 aa)). The Interaction with polymerase core subunit RpoC signature appears at 276-279 (DLIQ). The interval 331–412 (ETINRLAKAE…DTDAQMPDEF (82 aa)) is sigma-70 factor domain-3. The segment at 425–480 (LLNNCLSEQEELIVRMRIGMPPYNETKTLDEVSQKIKIPREKIRQIETKAIRKLRQ) is sigma-70 factor domain-4. Positions 453 to 472 (LDEVSQKIKIPREKIRQIET) form a DNA-binding region, H-T-H motif.

It belongs to the sigma-70 factor family. RpoD/SigA subfamily. As to quaternary structure, interacts transiently with the RNA polymerase catalytic core.

Its subcellular location is the cytoplasm. Sigma factors are initiation factors that promote the attachment of RNA polymerase to specific initiation sites and are then released. This sigma factor is the primary sigma factor during exponential growth. The sequence is that of RNA polymerase sigma factor SigA from Mycoplasma pneumoniae (strain ATCC 29342 / M129 / Subtype 1) (Mycoplasmoides pneumoniae).